Consider the following 215-residue polypeptide: Large ribosomal subunit protein uL4 (215 aa).

The interval Thr46–Arg72 is disordered. The span at Ser56–Ala71 shows a compositional bias: gly residues.

The protein belongs to the universal ribosomal protein uL4 family. As to quaternary structure, part of the 50S ribosomal subunit.

Its function is as follows. One of the primary rRNA binding proteins, this protein initially binds near the 5'-end of the 23S rRNA. It is important during the early stages of 50S assembly. It makes multiple contacts with different domains of the 23S rRNA in the assembled 50S subunit and ribosome. Forms part of the polypeptide exit tunnel. This is Large ribosomal subunit protein uL4 from Helicobacter pylori (strain J99 / ATCC 700824) (Campylobacter pylori J99).